The sequence spans 21 residues: Buforin-2 (21 aa).

Position 21 is an N6-(2-hydroxyisobutyryl)lysine; alternate (Lys-21).

This sequence belongs to the histone H2A family. In terms of tissue distribution, expressed by the skin glands.

The protein localises to the secreted. In terms of biological role, antimicrobial peptide with potent activity against some Gram-positive and Gram-negative bacteria. Does not permeabilize membrane, but internalizes into bacterial cells and alter specific gene expression involved in bacterial resistance mechanisms. Has the ability to agglutinate E.coli, and lipid vesicles. Shows a weak hemolytic activity, and is not cytotoxic to monocytes. The polypeptide is Buforin-2 (Sphaenorhynchus lacteus (Orinoco lime treefrog)).